The chain runs to 350 residues: Hydroxymethylglutaryl-CoA synthase (350 aa).

Glutamate 83 (proton donor/acceptor) is an active-site residue. The Acyl-thioester intermediate role is filled by cysteine 115. (3S)-3-hydroxy-3-methylglutaryl-CoA-binding residues include cysteine 115 and threonine 156. Position 204 (arginine 204) interacts with CoA. (3S)-3-hydroxy-3-methylglutaryl-CoA is bound by residues threonine 206 and histidine 239. Histidine 239 acts as the Proton donor/acceptor in catalysis. Residue lysine 244 coordinates CoA. (3S)-3-hydroxy-3-methylglutaryl-CoA is bound by residues asparagine 271 and serine 301.

The protein belongs to the thiolase-like superfamily. Archaeal HMG-CoA synthase family. In terms of assembly, interacts with acetoacetyl-CoA thiolase that catalyzes the precedent step in the pathway and with a DUF35 protein. The acetoacetyl-CoA thiolase/HMG-CoA synthase complex channels the intermediate via a fused CoA-binding site, which allows for efficient coupling of the endergonic thiolase reaction with the exergonic HMGCS reaction.

The enzyme catalyses acetoacetyl-CoA + acetyl-CoA + H2O = (3S)-3-hydroxy-3-methylglutaryl-CoA + CoA + H(+). It participates in metabolic intermediate biosynthesis; (R)-mevalonate biosynthesis; (R)-mevalonate from acetyl-CoA: step 2/3. Its function is as follows. Catalyzes the condensation of acetyl-CoA with acetoacetyl-CoA to form 3-hydroxy-3-methylglutaryl-CoA (HMG-CoA). Functions in the mevalonate (MVA) pathway leading to isopentenyl diphosphate (IPP), a key precursor for the biosynthesis of isoprenoid compounds that are building blocks of archaeal membrane lipids. The protein is Hydroxymethylglutaryl-CoA synthase of Thermococcus onnurineus (strain NA1).